Reading from the N-terminus, the 131-residue chain is Global transcriptional regulator Spx 1 (131 aa).

A disulfide bridge links C10 with C13.

The protein belongs to the ArsC family. Spx subfamily. In terms of assembly, interacts with the C-terminal domain of the alpha subunit of the RNAP.

It is found in the cytoplasm. Its function is as follows. Global transcriptional regulator that plays a key role in stress response and exerts either positive or negative regulation of genes. Acts by interacting with the C-terminal domain of the alpha subunit of the RNA polymerase (RNAP). This interaction can enhance binding of RNAP to the promoter region of target genes and stimulate their transcription, or block interaction of RNAP with activator. The sequence is that of Global transcriptional regulator Spx 1 from Oceanobacillus iheyensis (strain DSM 14371 / CIP 107618 / JCM 11309 / KCTC 3954 / HTE831).